The primary structure comprises 331 residues: Phenylalanine--tRNA ligase alpha subunit (331 aa).

E252 serves as a coordination point for Mg(2+).

This sequence belongs to the class-II aminoacyl-tRNA synthetase family. Phe-tRNA synthetase alpha subunit type 1 subfamily. As to quaternary structure, tetramer of two alpha and two beta subunits. The cofactor is Mg(2+).

Its subcellular location is the cytoplasm. The catalysed reaction is tRNA(Phe) + L-phenylalanine + ATP = L-phenylalanyl-tRNA(Phe) + AMP + diphosphate + H(+). The chain is Phenylalanine--tRNA ligase alpha subunit from Xanthomonas oryzae pv. oryzae (strain MAFF 311018).